The primary structure comprises 242 residues: 1-(5-phosphoribosyl)-5-[(5-phosphoribosylamino)methylideneamino] imidazole-4-carboxamide isomerase (242 aa).

Catalysis depends on Asp-8, which acts as the Proton acceptor. Asp-129 acts as the Proton donor in catalysis.

It belongs to the HisA/HisF family.

It localises to the cytoplasm. It carries out the reaction 1-(5-phospho-beta-D-ribosyl)-5-[(5-phospho-beta-D-ribosylamino)methylideneamino]imidazole-4-carboxamide = 5-[(5-phospho-1-deoxy-D-ribulos-1-ylimino)methylamino]-1-(5-phospho-beta-D-ribosyl)imidazole-4-carboxamide. It functions in the pathway amino-acid biosynthesis; L-histidine biosynthesis; L-histidine from 5-phospho-alpha-D-ribose 1-diphosphate: step 4/9. The polypeptide is 1-(5-phosphoribosyl)-5-[(5-phosphoribosylamino)methylideneamino] imidazole-4-carboxamide isomerase (Clostridium botulinum (strain Okra / Type B1)).